A 382-amino-acid polypeptide reads, in one-letter code: Protein phosphatase 1A (382 aa).

Residue G2 is the site of N-myristoyl glycine attachment. One can recognise a PPM-type phosphatase domain in the interval 23–291 (RYGLSSMQGW…DNMSVILICF (269 aa)). Mn(2+)-binding residues include D60, G61, D239, and D282. S375 and S377 each carry phosphoserine.

The protein belongs to the PP2C family. Monomer. Interacts with SMAD2; the interaction dephosphorylates SMAD2 in its C-terminal SXS motif resulting in disruption of the SMAD2/SMAD4 complex, SMAD2 nuclear export and termination of the TGF-beta-mediated signaling. Interacts with SMAD2; the interaction dephosphorylates SMAD2 in its C-terminal SXS motif resulting in disruption of the SMAD2/SMAD4 complex, SMAD2 nuclear export and termination of the TGF-beta-mediated signaling. Interacts with the phosphorylated form of IKBKB/IKKB. The cofactor is Mg(2+). Mn(2+) is required as a cofactor. N-myristoylation is essential for the recognition of its substrates for dephosphorylation.

It is found in the nucleus. The protein resides in the cytoplasm. It localises to the cytosol. The protein localises to the membrane. The catalysed reaction is O-phospho-L-seryl-[protein] + H2O = L-seryl-[protein] + phosphate. It catalyses the reaction O-phospho-L-threonyl-[protein] + H2O = L-threonyl-[protein] + phosphate. In terms of biological role, enzyme with a broad specificity. Negatively regulates TGF-beta signaling through dephosphorylating SMAD2 and SMAD3, resulting in their dissociation from SMAD4, nuclear export of the SMADs and termination of the TGF-beta-mediated signaling. Dephosphorylates PRKAA1 and PRKAA2. Plays an important role in the termination of TNF-alpha-mediated NF-kappa-B activation through dephosphorylating and inactivating IKBKB/IKKB. This Bos taurus (Bovine) protein is Protein phosphatase 1A (PPM1A).